The sequence spans 390 residues: Acetylornithine aminotransferase (390 aa).

Pyridoxal 5'-phosphate contacts are provided by residues 105-106 (GA) and F132. Position 135 (R135) interacts with N(2)-acetyl-L-ornithine. 217–220 (DEVQ) lines the pyridoxal 5'-phosphate pocket. N6-(pyridoxal phosphate)lysine is present on K246. N(2)-acetyl-L-ornithine is bound at residue S274. T275 lines the pyridoxal 5'-phosphate pocket.

It belongs to the class-III pyridoxal-phosphate-dependent aminotransferase family. ArgD subfamily. Homodimer. Pyridoxal 5'-phosphate serves as cofactor.

Its subcellular location is the cytoplasm. The enzyme catalyses N(2)-acetyl-L-ornithine + 2-oxoglutarate = N-acetyl-L-glutamate 5-semialdehyde + L-glutamate. It participates in amino-acid biosynthesis; L-arginine biosynthesis; N(2)-acetyl-L-ornithine from L-glutamate: step 4/4. This is Acetylornithine aminotransferase from Methanothermobacter thermautotrophicus (strain ATCC 29096 / DSM 1053 / JCM 10044 / NBRC 100330 / Delta H) (Methanobacterium thermoautotrophicum).